The chain runs to 225 residues: Orotate phosphoribosyltransferase (225 aa).

Position 32 (Lys32) interacts with 5-phospho-alpha-D-ribose 1-diphosphate. 40–41 (FF) lines the orotate pocket. 5-phospho-alpha-D-ribose 1-diphosphate contacts are provided by residues 78–79 (YK), Arg104, Lys105, Lys108, His110, and 129–137 (DDVISAGTS). The orotate site is built by Ser133 and Arg161.

The protein belongs to the purine/pyrimidine phosphoribosyltransferase family. PyrE subfamily. As to quaternary structure, homodimer. Mg(2+) serves as cofactor.

The enzyme catalyses orotidine 5'-phosphate + diphosphate = orotate + 5-phospho-alpha-D-ribose 1-diphosphate. The protein operates within pyrimidine metabolism; UMP biosynthesis via de novo pathway; UMP from orotate: step 1/2. In terms of biological role, catalyzes the transfer of a ribosyl phosphate group from 5-phosphoribose 1-diphosphate to orotate, leading to the formation of orotidine monophosphate (OMP). In Cupriavidus metallidurans (strain ATCC 43123 / DSM 2839 / NBRC 102507 / CH34) (Ralstonia metallidurans), this protein is Orotate phosphoribosyltransferase.